Consider the following 319-residue polypeptide: ATP-dependent 6-phosphofructokinase (319 aa).

Residue glycine 11 coordinates ATP. ADP is bound at residue 21–25; sequence RAVVR. Residues 72–73 and 102–105 contribute to the ATP site; these read RS and GDGS. Residue aspartate 103 coordinates Mg(2+). Residue 125–127 participates in substrate binding; that stretch reads TID. Residue aspartate 127 is the Proton acceptor of the active site. Arginine 154 contacts ADP. Substrate is bound by residues arginine 162 and 169–171; that span reads MGR. ADP is bound by residues 185 to 187, arginine 211, and 213 to 215; these read GAE and KKH. Residues glutamate 222, arginine 243, and 249 to 252 each bind substrate; that span reads HIQR.

Belongs to the phosphofructokinase type A (PFKA) family. ATP-dependent PFK group I subfamily. Prokaryotic clade 'B1' sub-subfamily. As to quaternary structure, homotetramer. Mg(2+) serves as cofactor.

Its subcellular location is the cytoplasm. It catalyses the reaction beta-D-fructose 6-phosphate + ATP = beta-D-fructose 1,6-bisphosphate + ADP + H(+). It participates in carbohydrate degradation; glycolysis; D-glyceraldehyde 3-phosphate and glycerone phosphate from D-glucose: step 3/4. With respect to regulation, allosterically activated by ADP and other diphosphonucleosides, and allosterically inhibited by phosphoenolpyruvate. Functionally, catalyzes the phosphorylation of D-fructose 6-phosphate to fructose 1,6-bisphosphate by ATP, the first committing step of glycolysis. This Oceanobacillus iheyensis (strain DSM 14371 / CIP 107618 / JCM 11309 / KCTC 3954 / HTE831) protein is ATP-dependent 6-phosphofructokinase.